The primary structure comprises 534 residues: Phenylalanine N-monooxygenase CYP79D16 (534 aa).

A signal peptide spans 1–21 (MEANVGFLTLCLAITLVRFLM). Residue cysteine 472 participates in heme binding. Asparagine 500 is a glycosylation site (N-linked (GlcNAc...) asparagine).

The protein belongs to the cytochrome P450 family. Requires heme as cofactor. Expressed in seedlings.

It catalyses the reaction L-phenylalanine + 2 reduced [NADPH--hemoprotein reductase] + 2 O2 = (E)-phenylacetaldehyde oxime + 2 oxidized [NADPH--hemoprotein reductase] + CO2 + 3 H2O + 2 H(+). Its function is as follows. Involved in L-phenylalanine-derived cyanogenic glycoside biosynthesis, including prunasin and amygdalin defensive agents. Catalyzes the conversion of L-phenylalanine (Phe) into phenylacetaldoxime (PAOx). Cannot use tyrosine (Tyr), tryptophan (Trp) and valine (Val) as substrates. This chain is Phenylalanine N-monooxygenase CYP79D16, found in Prunus mume (Japanese apricot).